Reading from the N-terminus, the 151-residue chain is 3-hydroxyacyl-[acyl-carrier-protein] dehydratase FabZ (151 aa).

His54 is a catalytic residue.

Belongs to the thioester dehydratase family. FabZ subfamily.

It localises to the cytoplasm. The enzyme catalyses a (3R)-hydroxyacyl-[ACP] = a (2E)-enoyl-[ACP] + H2O. Its function is as follows. Involved in unsaturated fatty acids biosynthesis. Catalyzes the dehydration of short chain beta-hydroxyacyl-ACPs and long chain saturated and unsaturated beta-hydroxyacyl-ACPs. The protein is 3-hydroxyacyl-[acyl-carrier-protein] dehydratase FabZ of Blochmanniella floridana.